Here is a 406-residue protein sequence, read N- to C-terminus: Pygopus homolog 2 (406 aa).

2 disordered regions span residues 1–73 (MAAS…DHLV) and 106–323 (VQGG…PQPP). Ala-2 carries the post-translational modification N-acetylalanine. The residue at position 40 (Ser-40) is a Phosphoserine. The short motif at 41–47 (PEKKRRK) is the Nuclear localization signal element. Pro residues-rich tracts occupy residues 131 to 141 (RQPPPFPPNPM) and 149 to 158 (PQGPGYPPPG). The segment covering 164 to 179 (SQPFNQPLGQNFSPPS) has biased composition (polar residues). The span at 236–252 (SLPPNTSPFPGPDPGFP) shows a compositional bias: pro residues. Positions 285–296 (NGNQPSFPPNSS) are enriched in polar residues. Thr-302 is modified (phosphothreonine). The segment at 327–385 (VYPCGACRSEVNDDQDAILCEASCQKWFHRECTGMTESAYGLLTTEASAVWACDLCLKT) adopts a PHD-type zinc-finger fold.

As to quaternary structure, binds to BCL9 via the PHD-type zinc finger motif, and thereby becomes part of the nuclear beta-catenin/TCF complex.

It is found in the nucleus. Functionally, involved in signal transduction through the Wnt pathway. This is Pygopus homolog 2 (PYGO2) from Homo sapiens (Human).